A 289-amino-acid chain; its full sequence is MRILEKAPAKINLSLDVTSKRPDGYHEVEMIMTTIDLADRIELTELPENVIRVASHNRFVPDDQRNLAYQAAKLLKERFQVKKGVSIMITKVIPVAAGLAGGSSDAAATLRGLNRLWDLKLSVEELAELGAEIGSDVSFCVYGGTALATGRGEKIRHISAPPHCWVVLAKPTIGVSTAEVYRRLNLQQVRHPDVQAMIDAIEEKSFQKVCGQLGNVLESVTLSLHPEVAMIKNQMKRFGADAVLMSGSGPTVFGLVQYESKVQRIYNGLRGFCDQVYAVRMIGEQNALD.

Residue K10 is part of the active site. Residue P94–S104 participates in ATP binding. D136 is an active-site residue.

The protein belongs to the GHMP kinase family. IspE subfamily.

The catalysed reaction is 4-CDP-2-C-methyl-D-erythritol + ATP = 4-CDP-2-C-methyl-D-erythritol 2-phosphate + ADP + H(+). It functions in the pathway isoprenoid biosynthesis; isopentenyl diphosphate biosynthesis via DXP pathway; isopentenyl diphosphate from 1-deoxy-D-xylulose 5-phosphate: step 3/6. In terms of biological role, catalyzes the phosphorylation of the position 2 hydroxy group of 4-diphosphocytidyl-2C-methyl-D-erythritol. In Bacillus velezensis (strain DSM 23117 / BGSC 10A6 / LMG 26770 / FZB42) (Bacillus amyloliquefaciens subsp. plantarum), this protein is 4-diphosphocytidyl-2-C-methyl-D-erythritol kinase.